Consider the following 441-residue polypeptide: Homoserine dehydrogenase (441 aa).

Residues asparagine 17 and valine 18 each coordinate NADP(+). Positions 18 and 47 each coordinate NAD(+). Valine 18 provides a ligand contact to NADPH. 3 residues coordinate NADP(+): arginine 49, arginine 50, and lysine 107. Arginine 49 contacts NADPH. Lysine 107 is an NADPH binding site. The Na(+) site is built by glutamate 131, valine 134, glycine 136, and isoleucine 138. Glycine 189 and glutamate 192 together coordinate NADP(+). 2 residues coordinate L-homoserine: glutamate 192 and aspartate 203. Lysine 207 functions as the Proton donor in the catalytic mechanism. Glycine 309 serves as a coordination point for NADP(+). Residue glycine 309 coordinates NAD(+). NADPH is bound at residue glycine 309. The ACT domain occupies 356–435 (YVSMNVADKP…VVQGVTSVLR (80 aa)).

It belongs to the homoserine dehydrogenase family. Requires a metal cation as cofactor.

The enzyme catalyses L-homoserine + NADP(+) = L-aspartate 4-semialdehyde + NADPH + H(+). It catalyses the reaction L-homoserine + NAD(+) = L-aspartate 4-semialdehyde + NADH + H(+). The protein operates within amino-acid biosynthesis; L-methionine biosynthesis via de novo pathway; L-homoserine from L-aspartate: step 3/3. Its pathway is amino-acid biosynthesis; L-threonine biosynthesis; L-threonine from L-aspartate: step 3/5. Its function is as follows. Catalyzes the conversion of L-aspartate-beta-semialdehyde (L-Asa) to L-homoserine (L-Hse), the third step in the biosynthesis of threonine and methionine from aspartate. This Mycobacterium leprae (strain TN) protein is Homoserine dehydrogenase (hom).